The primary structure comprises 125 residues: Glycine cleavage system H protein (125 aa).

The region spanning 19 to 101 (VGTVGISDYA…EGAAWFFKLT (83 aa)) is the Lipoyl-binding domain. N6-lipoyllysine is present on Lys-60.

Belongs to the GcvH family. As to quaternary structure, the glycine cleavage system is composed of four proteins: P, T, L and H. (R)-lipoate serves as cofactor.

Functionally, the glycine cleavage system catalyzes the degradation of glycine. The H protein shuttles the methylamine group of glycine from the P protein to the T protein. The chain is Glycine cleavage system H protein from Paramagnetospirillum magneticum (strain ATCC 700264 / AMB-1) (Magnetospirillum magneticum).